The following is a 190-amino-acid chain: MDADSDVALDILITNVVCVFRTRCHLNLRKIALEGANVIYKRDVGKVLMKLRKPRITATIWSSGKIICTGATSEEEAKFGARRLARSLQKLGFQVIFTDFKVVNVLAVCNMPFEIRLPEFTKNNRPHASYEPELHPAVCYRIKSLRATLQIFSTGSITVTGPNVKAVATAVEQIYPFVFESRKEILSFTT.

Belongs to the TBP family. As to quaternary structure, binds TFIIA and TFIIB.

The protein localises to the cytoplasm. It is found in the nucleus. Functionally, part of a specialized transcription system that mediates the transcription of most ribosomal proteins through the 5'-TCT-3' motif which is a core promoter element at these genes. Seems to also mediate the transcription of NF1. Does not bind the TATA box. The protein is TATA box-binding protein-like 1 (TBPL1) of Pongo abelii (Sumatran orangutan).